Reading from the N-terminus, the 141-residue chain is Nucleoside diphosphate kinase (141 aa).

ATP contacts are provided by lysine 11, phenylalanine 59, arginine 87, threonine 93, arginine 104, and asparagine 114. Histidine 117 functions as the Pros-phosphohistidine intermediate in the catalytic mechanism.

It belongs to the NDK family. As to quaternary structure, homotetramer. It depends on Mg(2+) as a cofactor.

The protein localises to the cytoplasm. It carries out the reaction a 2'-deoxyribonucleoside 5'-diphosphate + ATP = a 2'-deoxyribonucleoside 5'-triphosphate + ADP. The catalysed reaction is a ribonucleoside 5'-diphosphate + ATP = a ribonucleoside 5'-triphosphate + ADP. Functionally, major role in the synthesis of nucleoside triphosphates other than ATP. The ATP gamma phosphate is transferred to the NDP beta phosphate via a ping-pong mechanism, using a phosphorylated active-site intermediate. The chain is Nucleoside diphosphate kinase from Hamiltonella defensa subsp. Acyrthosiphon pisum (strain 5AT).